A 212-amino-acid chain; its full sequence is Leucyl/phenylalanyl-tRNA--protein transferase (212 aa).

Belongs to the L/F-transferase family.

The protein localises to the cytoplasm. The catalysed reaction is N-terminal L-lysyl-[protein] + L-leucyl-tRNA(Leu) = N-terminal L-leucyl-L-lysyl-[protein] + tRNA(Leu) + H(+). It catalyses the reaction N-terminal L-arginyl-[protein] + L-leucyl-tRNA(Leu) = N-terminal L-leucyl-L-arginyl-[protein] + tRNA(Leu) + H(+). It carries out the reaction L-phenylalanyl-tRNA(Phe) + an N-terminal L-alpha-aminoacyl-[protein] = an N-terminal L-phenylalanyl-L-alpha-aminoacyl-[protein] + tRNA(Phe). In terms of biological role, functions in the N-end rule pathway of protein degradation where it conjugates Leu, Phe and, less efficiently, Met from aminoacyl-tRNAs to the N-termini of proteins containing an N-terminal arginine or lysine. In Christiangramia forsetii (strain DSM 17595 / CGMCC 1.15422 / KT0803) (Gramella forsetii), this protein is Leucyl/phenylalanyl-tRNA--protein transferase.